Here is a 1032-residue protein sequence, read N- to C-terminus: Contactin-1a (1032 aa).

Positions 1 to 31 (MIPEAFQPRAMKHTTTVLMLALSSRFWSVCA) are cleaved as a signal peptide. Ig-like C2-type domains lie at 46–139 (PVFE…ARVQ), 144–231 (DMFS…KSVF), 249–335 (PADI…THLY), 340–417 (PDWL…AELR), 423–510 (PSFQ…GSLS), and 515–612 (TKIT…AELV). Cystine bridges form between Cys70–Cys122 and Cys166–Cys219. N-linked (GlcNAc...) asparagine glycosylation is found at Asn119, Asn216, and Asn266. 3 disulfides stabilise this stretch: Cys271–Cys319, Cys361–Cys401, and Cys446–Cys494. Asn455, Asn467, Asn483, and Asn504 each carry an N-linked (GlcNAc...) asparagine glycan. A disulfide bridge connects residues Cys536 and Cys596. A glycan (N-linked (GlcNAc...) asparagine) is linked at Asn604. Fibronectin type-III domains follow at residues 619 to 718 (PPGG…TREA), 723 to 820 (APSD…SAQD), 825 to 918 (APII…TKKS), and 920 to 1015 (PSRP…APAP). The interval 699 to 729 (NTLGTGPPSEPSPKTTTREARPIVAPSDIGG) is disordered. An N-linked (GlcNAc...) asparagine glycan is attached at Asn879. Residues 907 to 926 (ASQRNRIYTKKSPPSRPPKI) are disordered. An N-linked (GlcNAc...) asparagine glycan is attached at Asn950. Gly1010 carries the GPI-anchor amidated glycine lipid modification. Residues 1011 to 1032 (SAPAPALASALLLLPLLWTLML) constitute a propeptide, removed in mature form.

It belongs to the immunoglobulin superfamily. Contactin family. Expressed in brain.

It localises to the cell membrane. In terms of biological role, mediates cell surface interactions during nervous system development. The protein is Contactin-1a (cntn1a) of Danio rerio (Zebrafish).